We begin with the raw amino-acid sequence, 473 residues long: Serine palmitoyltransferase 1 (473 aa).

Residues 1–66 (MATATEQWVL…KEELIEEWQP (66 aa)) are interaction with SPTLC2. A helical transmembrane segment spans residues 16–36 (ALYEAPAYHLILEGILILWII). Residue Tyr-164 is modified to Phosphotyrosine; by ABL.

The protein belongs to the class-II pyridoxal-phosphate-dependent aminotransferase family. As to quaternary structure, component of the serine palmitoyltransferase (SPT) complex, which is also composed of SPTLC2 or SPTLC3 and SPTSSA or SPTSSB. The heterodimer with SPTLC2 or SPTLC3 forms the catalytic core of the enzyme, while SPTSSA or SPTSSB subunits determine substrate specificity. SPT also interacts with ORMDL proteins, especially ORMDL3, which negatively regulate SPT activity in the presence of ceramides. Forms dimers of heterodimers with SPTLC2. Interacts with RTN4. The cofactor is pyridoxal 5'-phosphate. Phosphorylation at Tyr-164 inhibits activity and promotes cell survival.

The protein localises to the endoplasmic reticulum membrane. The enzyme catalyses L-serine + hexadecanoyl-CoA + H(+) = 3-oxosphinganine + CO2 + CoA. The catalysed reaction is octadecanoyl-CoA + L-serine + H(+) = 3-oxoeicosasphinganine + CO2 + CoA. It catalyses the reaction tetradecanoyl-CoA + L-serine + H(+) = 3-oxohexadecasphinganine + CO2 + CoA. It carries out the reaction dodecanoyl-CoA + L-serine + H(+) = 3-oxotetradecasphinganine + CO2 + CoA. The protein operates within lipid metabolism; sphingolipid metabolism. Its activity is regulated as follows. SPT complex catalytic activity is negatively regulated by ORMDL proteins, including ORMDL3, in the presence of ceramides. This mechanism allows to maintain ceramide levels at sufficient concentrations for the production of complex sphingolipids, but which prevents the accumulation of ceramides to levels that trigger apoptosis. In terms of biological role, component of the serine palmitoyltransferase multisubunit enzyme (SPT) that catalyzes the initial and rate-limiting step in sphingolipid biosynthesis by condensing L-serine and activated acyl-CoA (most commonly palmitoyl-CoA) to form long-chain bases. The SPT complex is also composed of SPTLC2 or SPTLC3 and SPTSSA or SPTSSB. Within this complex, the heterodimer with SPTLC2 or SPTLC3 forms the catalytic core. The composition of the serine palmitoyltransferase (SPT) complex determines the substrate preference. The SPTLC1-SPTLC2-SPTSSA complex shows a strong preference for C16-CoA substrate, while the SPTLC1-SPTLC3-SPTSSA isozyme uses both C14-CoA and C16-CoA as substrates, with a slight preference for C14-CoA. The SPTLC1-SPTLC2-SPTSSB complex shows a strong preference for C18-CoA substrate, while the SPTLC1-SPTLC3-SPTSSB isozyme displays an ability to use a broader range of acyl-CoAs, without apparent preference. Required for adipocyte cell viability and metabolic homeostasis. This is Serine palmitoyltransferase 1 (SPTLC1) from Pongo abelii (Sumatran orangutan).